The sequence spans 478 residues: ATP-dependent RNA helicase DDX19A (478 aa).

The residue at position 2 (Ala-2) is an N-acetylalanine. Residues 2-299 (ATDSWALAVD…DPNIIKLKRE (298 aa)) are N-terminal lobe. Lys-26 participates in a covalent cross-link: Glycyl lysine isopeptide (Lys-Gly) (interchain with G-Cter in SUMO1); alternate. Residue Lys-26 forms a Glycyl lysine isopeptide (Lys-Gly) (interchain with G-Cter in SUMO2); alternate linkage. The segment at 34–53 (TNGVIKTSTTAEKTEEEEKE) is disordered. Thr-42 bears the Phosphothreonine mark. Residues 54–67 (DRAAQSLLNKLIRS) are N-terminal helix. Residues 91 to 119 (KSFEELRLKPQLLQGVYAMGFNRPSKIQE) carry the Q motif motif. Residues Gln-118 and 137-144 (SQSGTGKT) contribute to the ATP site. Residues 124 to 294 (MMLAEPPQNL…QKVVPDPNII (171 aa)) enclose the Helicase ATP-binding domain. The DEAD box motif lies at 241 to 244 (DEAD). The interval 300–478 (EETLDTIKQY…DLDEIEKIAN (179 aa)) is C-terminal lobe. The region spanning 305-473 (TIKQYYVLCN…RLDTDDLDEI (169 aa)) is the Helicase C-terminal domain. Residues Arg-428 and Arg-431 each contribute to the ATP site.

The protein belongs to the DEAD box helicase family. DDX19/DBP5 subfamily. Found in testis, heart, brain, liver, skeletal muscle, and kidney.

Its subcellular location is the cytoplasm. The protein localises to the nucleus. It localises to the nucleoplasm. The enzyme catalyses ATP + H2O = ADP + phosphate + H(+). Its function is as follows. ATP-dependent RNA helicase involved in mRNA export from the nucleus. Rather than unwinding RNA duplexes, DDX19 functions as a remodeler of ribonucleoprotein particles, whereby proteins bound to nuclear mRNA are dissociated and replaced by cytoplasmic mRNA binding proteins. This chain is ATP-dependent RNA helicase DDX19A (Ddx19a), found in Mus musculus (Mouse).